A 411-amino-acid polypeptide reads, in one-letter code: Bifunctional protein GlmU (411 aa).

Residues 1 to 204 (MDAIILCAGK…NGKLHGIELN (204 aa)) are pyrophosphorylase. UTP contacts are provided by residues 6 to 9 (LCAG), Gln-74, and Gly-79. Residues Thr-80, Gly-130, Asn-142, and Asn-158 each contribute to the N-acetyl-alpha-D-glucosamine 1-phosphate site. A linker region spans residues 205 to 224 (GYWNDIGHPWDVLSANNRFL). The segment at 225-411 (NKIISKVSGK…DELVITKKRN (187 aa)) is N-acetyltransferase. Catalysis depends on His-308, which acts as the Proton acceptor. Residues Ala-384 and Lys-401 each coordinate acetyl-CoA.

It in the N-terminal section; belongs to the N-acetylglucosamine-1-phosphate uridyltransferase family. This sequence in the C-terminal section; belongs to the transferase hexapeptide repeat family.

It catalyses the reaction N-acetyl-alpha-D-glucosamine 1-phosphate + UTP + H(+) = UDP-N-acetyl-alpha-D-glucosamine + diphosphate. It carries out the reaction alpha-D-glucosamine 1-phosphate + acetyl-CoA = N-acetyl-alpha-D-glucosamine 1-phosphate + CoA + H(+). Its pathway is nucleotide-sugar biosynthesis; UDP-N-acetyl-alpha-D-glucosamine biosynthesis; N-acetyl-alpha-D-glucosamine 1-phosphate from alpha-D-glucosamine 6-phosphate (route II): step 2/2. It participates in nucleotide-sugar biosynthesis; UDP-N-acetyl-alpha-D-glucosamine biosynthesis; UDP-N-acetyl-alpha-D-glucosamine from N-acetyl-alpha-D-glucosamine 1-phosphate: step 1/1. Functionally, catalyzes the last two sequential reactions in the de novo biosynthetic pathway for UDP-N-acetyl-glucosamine (UDP-GlcNAc). Responsible for the acetylation of GlcN-1-P to GlcNAc-1-P, and for the uridyl transfer from UTP to GlcNAc-1-P, to produce UDP-GlcNAc and pyrophosphate. The chain is Bifunctional protein GlmU from Methanococcus maripaludis (strain C7 / ATCC BAA-1331).